The sequence spans 656 residues: DNA topoisomerase 3 (656 aa).

In terms of domain architecture, Toprim spans 2 to 156 (KVLCVAEKNS…QVYRAVFSHL (155 aa)). The Topo IA-type catalytic domain maps to 172–635 (DMKSVHAVGT…DIVEKYRKYW (464 aa)). Residue tyrosine 356 is the O-(5'-phospho-DNA)-tyrosine intermediate of the active site.

Belongs to the type IA topoisomerase family. As to quaternary structure, forms a complex with SGS1 and RMI1. Interacts with SGS1.

It catalyses the reaction ATP-independent breakage of single-stranded DNA, followed by passage and rejoining.. Its function is as follows. Releases the supercoiling and torsional tension of DNA introduced during the DNA replication and transcription by transiently cleaving and rejoining one strand of the DNA duplex. Introduces a single-strand break via transesterification at a target site in duplex DNA. The scissile phosphodiester is attacked by the catalytic tyrosine of the enzyme, resulting in the formation of a DNA-(5'-phosphotyrosyl)-enzyme intermediate and the expulsion of a 3'-OH DNA strand. The free DNA strand than undergoes passage around the unbroken strand thus removing DNA supercoils. Finally, in the religation step, the DNA 3'-OH attacks the covalent intermediate to expel the active-site tyrosine and restore the DNA phosphodiester backbone. Essential for proper chromosome segregation in both meiosis and mitosis. Weakly relaxes negative supercoils and displays a distinct preference for binding single-stranded DNA. The TOP3-SGS1 protein complex may function as a eukaryotic reverse gyrase introducing positive supercoils into extrachromosomal ribosomal DNA rings. The sequence is that of DNA topoisomerase 3 (TOP3) from Saccharomyces cerevisiae (strain ATCC 204508 / S288c) (Baker's yeast).